A 424-amino-acid polypeptide reads, in one-letter code: Serine--tRNA ligase (424 aa).

L-serine is bound at residue 232 to 234 (TAE). 263–265 (RKE) is an ATP binding site. Glu286 lines the L-serine pocket. 350–353 (EISS) lines the ATP pocket. An L-serine-binding site is contributed by Ser386.

This sequence belongs to the class-II aminoacyl-tRNA synthetase family. Type-1 seryl-tRNA synthetase subfamily. As to quaternary structure, homodimer. The tRNA molecule binds across the dimer.

Its subcellular location is the cytoplasm. The catalysed reaction is tRNA(Ser) + L-serine + ATP = L-seryl-tRNA(Ser) + AMP + diphosphate + H(+). The enzyme catalyses tRNA(Sec) + L-serine + ATP = L-seryl-tRNA(Sec) + AMP + diphosphate + H(+). The protein operates within aminoacyl-tRNA biosynthesis; selenocysteinyl-tRNA(Sec) biosynthesis; L-seryl-tRNA(Sec) from L-serine and tRNA(Sec): step 1/1. In terms of biological role, catalyzes the attachment of serine to tRNA(Ser). Is also able to aminoacylate tRNA(Sec) with serine, to form the misacylated tRNA L-seryl-tRNA(Sec), which will be further converted into selenocysteinyl-tRNA(Sec). This is Serine--tRNA ligase from Thermodesulfovibrio yellowstonii (strain ATCC 51303 / DSM 11347 / YP87).